Reading from the N-terminus, the 485-residue chain is Calcium/manganese antiporter SLC30A10 (485 aa).

At 1–10 (MGRYSGKTCR) the chain is on the cytoplasmic side. The chain crosses the membrane as a helical span at residues 11 to 31 (LLFMLVLTVAFFVAELVSGYL). Residues 32 to 40 (GNSIALLSD) are Extracellular-facing. The helical transmembrane segment at 41-61 (SFNMLSDLISLCVGLSAGYIA) threads the bilayer. Residues 62 to 81 (RRPTRGFSATYGYARAEVVG) lie on the Cytoplasmic side of the membrane. The helical transmembrane segment at 82 to 102 (ALSNAVFLTALCFTIFVEAVL) threads the bilayer. Residues 103–113 (RLARPERIDDP) lie on the Extracellular side of the membrane. The chain crosses the membrane as a helical span at residues 114 to 134 (ELVLIVGVLGLLVNVVGLLIF). Residues 135 to 244 (QDCAAWFACC…ALNIRGVLLH (110 aa)) lie on the Cytoplasmic side of the membrane. The disordered stretch occupies residues 167-196 (FGGPQGAEDPRRAADPTAPGSDSAVTLRGT). A helical transmembrane segment spans residues 245–265 (VMGDALGSVVVVITAIIFYVL). Residues 266–278 (PLKSEDPCNWQCY) are Extracellular-facing. A helical membrane pass occupies residues 279–299 (IDPSLTVLMVIIILSSAFPLI). The Cytoplasmic portion of the chain corresponds to 300-485 (KETAAILLQM…DQCYVNRTHF (186 aa)). The tract at residues 308-485 (QMVPKGVNME…DQCYVNRTHF (178 aa)) is required for plasma membrane localization.

Belongs to the cation diffusion facilitator (CDF) transporter (TC 2.A.4) family. SLC30A subfamily. As to quaternary structure, forms homodimers. Forms heterodimers and high-molecular weight oligomers with SLC30A3, SLC30A2 and SLC30A4; heterodimerization is mediated by covalent-bound tyrosine residues, occurs probably in a tissue-specific manner and could mediate the intracellular zinc transport activity into early endosomes and recycling endosomes. In terms of tissue distribution, specifically expressed in fetal liver and fetal brain. Expressed in adult tissues with relative levels small intestine &gt; liver &gt; testes &gt; brain &gt; ovary &gt; colon &gt; cervix &gt; prostate &gt; placenta. Expressed in liver and neurons of the nervous system (at protein level).

It localises to the cell membrane. It is found in the golgi apparatus membrane. The protein localises to the recycling endosome membrane. The protein resides in the early endosome membrane. The catalysed reaction is Mn(2+)(out) + Ca(2+)(in) = Mn(2+)(in) + Ca(2+)(out). It carries out the reaction Zn(2+)(in) = Zn(2+)(out). In terms of biological role, calcium:manganese antiporter of the plasma membrane mediating the efflux of intracellular manganese coupled to an active extracellular calcium exchange. Required for intracellular manganese homeostasis, an essential cation for the function of several enzymes, including some crucially important for the metabolism of neurotransmitters and other neuronal metabolic pathways. Manganese can also be cytotoxic and induce oxidative stress, mitochondrial dysfunction and apoptosis. Could also have an intracellular zinc ion transporter activity, directly regulating intracellular zinc ion homeostasis and more indirectly various signaling pathway and biological processes. The chain is Calcium/manganese antiporter SLC30A10 from Homo sapiens (Human).